The sequence spans 641 residues: MMNLSRRTLLTTGSAATLAYALGMAGSAQAATAVTARPGVPVTAAPPLRLASRNSVFTRSGAGPRYWNIYGYSFPHNAPIPENEWKANIDWLAGNFADFGYDIACTDGWIEGSSRTTGNGYITSYNDSWQHDWAYWANYLAARKMKLGVYYNPLWVHRAAVEDASKTVLGRPDVKIADLVVPGDFFARDIGGNQLYWLDVTKSGAKEYVQGYVRYFKDLGVPYLRIDFLSWYEDGRDANIGQVNAPHGRANYELALSWINEAAGEDMEVSLVMPHMFQDGSAELANGDLVRINADADKGGWDRLSGMRQNWQDAWPNWANPFCGFTGWSHRNGRGQLILDGDFMRASTFASDEERKTMMNLMVAAGSPLAIADTYQQIGNNAWVYTNKEVLQLNADGLVGKPLYRSATPFSKDPGSRDTERWAGQLPDGSWGVALFNRSDTETVTKTIDFAKDLGLATGGNVRDLWEHRNLGMDSRATAALAPHASAIFRVTPPKMHGTTRYPAAFAAWGGGAGFNNNHPGYDGNGFVDGLQAGSGSADPLVTFAVQVPHRAATPSGYRYANATDDNTTSKTTTKKANPEKADRSTVDGPVHVSFPGLATWDTWGVAAGTITLDAGLNLVTIGRGATDKGAINLNWIELDM.

Positions 1–39 (MMNLSRRTLLTTGSAATLAYALGMAGSAQAATAVTARPG) form a signal peptide, tat-type signal. Asp227 functions as the Nucleophile in the catalytic mechanism. Asp288 (proton donor) is an active-site residue. A CBM6 domain is found at 500–640 (TRYPAAFAAW…AINLNWIELD (141 aa)). Residues 556 to 588 (SGYRYANATDDNTTSKTTTKKANPEKADRSTVD) form a disordered region. The segment covering 561–576 (ANATDDNTTSKTTTKK) has biased composition (low complexity). The span at 577–586 (ANPEKADRST) shows a compositional bias: basic and acidic residues.

It belongs to the glycosyl hydrolase 27 family. Post-translationally, predicted to be exported by the Tat system. The position of the signal peptide cleavage has been experimentally proven.

The protein resides in the secreted. It carries out the reaction Hydrolysis of (1-&gt;6)-alpha-D-glucosidic linkages in polysaccharides, to remove successive isomaltose units from the non-reducing ends of the chains.. This is Isomalto-dextranase (imd) from Arthrobacter globiformis.